The following is a 407-amino-acid chain: Imidazolonepropionase (407 aa).

Fe(3+)-binding residues include His74 and His76. 2 residues coordinate Zn(2+): His74 and His76. 4-imidazolone-5-propanoate is bound by residues Arg83, Tyr146, and His179. An N-formimidoyl-L-glutamate-binding site is contributed by Tyr146. His244 is a Fe(3+) binding site. Position 244 (His244) interacts with Zn(2+). A 4-imidazolone-5-propanoate-binding site is contributed by Gln247. Asp319 is a Fe(3+) binding site. Asp319 is a binding site for Zn(2+). Asn321 and Gly323 together coordinate N-formimidoyl-L-glutamate. Residue Thr324 coordinates 4-imidazolone-5-propanoate.

This sequence belongs to the metallo-dependent hydrolases superfamily. HutI family. Zn(2+) serves as cofactor. Requires Fe(3+) as cofactor.

Its subcellular location is the cytoplasm. It carries out the reaction 4-imidazolone-5-propanoate + H2O = N-formimidoyl-L-glutamate. The protein operates within amino-acid degradation; L-histidine degradation into L-glutamate; N-formimidoyl-L-glutamate from L-histidine: step 3/3. Catalyzes the hydrolytic cleavage of the carbon-nitrogen bond in imidazolone-5-propanoate to yield N-formimidoyl-L-glutamate. It is the third step in the universal histidine degradation pathway. The polypeptide is Imidazolonepropionase (Salmonella paratyphi A (strain ATCC 9150 / SARB42)).